The chain runs to 510 residues: NAD(P)H-quinone oxidoreductase subunit 2 B, chloroplastic (510 aa).

Transmembrane regions (helical) follow at residues 24–44, 57–77, 99–119, 124–144, 149–169, 183–203, 227–247, 295–315, 323–343, 354–374, 392–412, 418–438, and 482–502; these read LLLF…GLIL, IPWL…ALLF, IFQF…VEYI, MAIT…MFLC, LITI…LSGY, YLLM…WLYG, PGIS…LSPA, WHLL…LIAI, MLAY…IVGD, YMLF…SFGL, AFLA…PPLA, LHLF…IGLL, and LSMI…NPII.

Belongs to the complex I subunit 2 family. As to quaternary structure, NDH is composed of at least 16 different subunits, 5 of which are encoded in the nucleus.

It is found in the plastid. The protein localises to the chloroplast thylakoid membrane. It catalyses the reaction a plastoquinone + NADH + (n+1) H(+)(in) = a plastoquinol + NAD(+) + n H(+)(out). The catalysed reaction is a plastoquinone + NADPH + (n+1) H(+)(in) = a plastoquinol + NADP(+) + n H(+)(out). In terms of biological role, NDH shuttles electrons from NAD(P)H:plastoquinone, via FMN and iron-sulfur (Fe-S) centers, to quinones in the photosynthetic chain and possibly in a chloroplast respiratory chain. The immediate electron acceptor for the enzyme in this species is believed to be plastoquinone. Couples the redox reaction to proton translocation, and thus conserves the redox energy in a proton gradient. The polypeptide is NAD(P)H-quinone oxidoreductase subunit 2 B, chloroplastic (Morus indica (Mulberry)).